The primary structure comprises 329 residues: Ferredoxin--NADP reductase 2 (329 aa).

8 residues coordinate FAD: Thr18, Glu37, Gln45, Tyr50, Val90, Phe124, Asp285, and Ser326.

This sequence belongs to the ferredoxin--NADP reductase type 2 family. Homodimer. FAD is required as a cofactor.

It carries out the reaction 2 reduced [2Fe-2S]-[ferredoxin] + NADP(+) + H(+) = 2 oxidized [2Fe-2S]-[ferredoxin] + NADPH. The sequence is that of Ferredoxin--NADP reductase 2 from Bacillus mycoides (strain KBAB4) (Bacillus weihenstephanensis).